Reading from the N-terminus, the 252-residue chain is Electron transfer flavoprotein subunit beta (252 aa).

The protein belongs to the ETF beta-subunit/FixA family. Heterodimer of an alpha and a beta subunit. The cofactor is AMP.

It localises to the cytoplasm. It functions in the pathway lipid metabolism; butanoate metabolism. Its function is as follows. Part of an electron transfer flavoprotein involved in syntrophic growth of S.wolfei with butyrate. Probably receives electrons from butyryl-CoA dehydrogenases, and transfers them to the membrane-bound quinone oxidoreductase Swol_0698. The chain is Electron transfer flavoprotein subunit beta from Syntrophomonas wolfei subsp. wolfei (strain DSM 2245B / Goettingen).